A 260-amino-acid chain; its full sequence is Thiazole synthase (260 aa).

The active-site Schiff-base intermediate with DXP is lysine 102. 1-deoxy-D-xylulose 5-phosphate contacts are provided by residues glycine 163, 189–190 (AG), and 211–212 (NT).

This sequence belongs to the ThiG family. Homotetramer. Forms heterodimers with either ThiH or ThiS.

The protein localises to the cytoplasm. The catalysed reaction is [ThiS sulfur-carrier protein]-C-terminal-Gly-aminoethanethioate + 2-iminoacetate + 1-deoxy-D-xylulose 5-phosphate = [ThiS sulfur-carrier protein]-C-terminal Gly-Gly + 2-[(2R,5Z)-2-carboxy-4-methylthiazol-5(2H)-ylidene]ethyl phosphate + 2 H2O + H(+). It participates in cofactor biosynthesis; thiamine diphosphate biosynthesis. Its function is as follows. Catalyzes the rearrangement of 1-deoxy-D-xylulose 5-phosphate (DXP) to produce the thiazole phosphate moiety of thiamine. Sulfur is provided by the thiocarboxylate moiety of the carrier protein ThiS. In vitro, sulfur can be provided by H(2)S. This chain is Thiazole synthase, found in Geotalea uraniireducens (strain Rf4) (Geobacter uraniireducens).